A 320-amino-acid polypeptide reads, in one-letter code: Transcription termination/antitermination protein NusG (320 aa).

Belongs to the NusG family.

In terms of biological role, participates in transcription elongation, termination and antitermination. The polypeptide is Transcription termination/antitermination protein NusG (Mycoplasma pneumoniae (strain ATCC 29342 / M129 / Subtype 1) (Mycoplasmoides pneumoniae)).